Reading from the N-terminus, the 532-residue chain is Apolipoprotein N-acyltransferase (532 aa).

6 helical membrane passes run 37-57 (IFVA…GAIA), 75-95 (WWFG…ALLV), 106-126 (LAVL…AMIA), 128-148 (LLWS…ALAE), 179-199 (VIGL…PALL), and 207-227 (TGIG…AWTL). Residues 245-494 (VQPSIAQAMK…VGVVDSYLPS (250 aa)) form the CN hydrolase domain. E289 functions as the Proton acceptor in the catalytic mechanism. The active site involves K353. C406 serves as the catalytic Nucleophile. A helical membrane pass occupies residues 505-525 (GWIQTVLILLTLLAASVGLIL).

This sequence belongs to the CN hydrolase family. Apolipoprotein N-acyltransferase subfamily.

Its subcellular location is the cell inner membrane. The catalysed reaction is N-terminal S-1,2-diacyl-sn-glyceryl-L-cysteinyl-[lipoprotein] + a glycerophospholipid = N-acyl-S-1,2-diacyl-sn-glyceryl-L-cysteinyl-[lipoprotein] + a 2-acyl-sn-glycero-3-phospholipid + H(+). It functions in the pathway protein modification; lipoprotein biosynthesis (N-acyl transfer). Catalyzes the phospholipid dependent N-acylation of the N-terminal cysteine of apolipoprotein, the last step in lipoprotein maturation. This chain is Apolipoprotein N-acyltransferase, found in Brucella melitensis biotype 1 (strain ATCC 23456 / CCUG 17765 / NCTC 10094 / 16M).